Here is a 284-residue protein sequence, read N- to C-terminus: Glutamate 5-kinase 2 (284 aa).

An ATP-binding site is contributed by K26. S67, D154, and N166 together coordinate substrate. ATP is bound by residues 186–187 and 228–234; these read SD and SGGMVTK.

This sequence belongs to the glutamate 5-kinase family.

The protein localises to the cytoplasm. The catalysed reaction is L-glutamate + ATP = L-glutamyl 5-phosphate + ADP. It functions in the pathway amino-acid biosynthesis; L-proline biosynthesis; L-glutamate 5-semialdehyde from L-glutamate: step 1/2. Its function is as follows. Catalyzes the transfer of a phosphate group to glutamate to form L-glutamate 5-phosphate. In Mesorhizobium japonicum (strain LMG 29417 / CECT 9101 / MAFF 303099) (Mesorhizobium loti (strain MAFF 303099)), this protein is Glutamate 5-kinase 2.